The sequence spans 300 residues: Estradiol 17-beta-dehydrogenase 11 (300 aa).

The first 19 residues, 1–19, serve as a signal peptide directing secretion; it reads MKFLLDVLLLLPLLIVCSL. 40–64 contributes to the NADP(+) binding site; it reads LITGAGHGIGRLTAYEFAKLKSKLV. Residue Ser-172 participates in substrate binding. Tyr-185 (proton acceptor) is an active-site residue.

It belongs to the short-chain dehydrogenases/reductases (SDR) family. 17-beta-HSD 3 subfamily.

The protein resides in the endoplasmic reticulum. It localises to the lipid droplet. The enzyme catalyses 17beta-estradiol + NAD(+) = estrone + NADH + H(+). The catalysed reaction is 17beta-estradiol + NADP(+) = estrone + NADPH + H(+). Its function is as follows. Can convert androstan-3-alpha,17-beta-diol (3-alpha-diol) to androsterone in vitro, suggesting that it may participate in androgen metabolism during steroidogenesis. May act by metabolizing compounds that stimulate steroid synthesis and/or by generating metabolites that inhibit it. Has no activity toward DHEA (dehydroepiandrosterone), or A-dione (4-androste-3,17-dione), and only a slight activity toward testosterone to A-dione. In Pongo abelii (Sumatran orangutan), this protein is Estradiol 17-beta-dehydrogenase 11 (HSD17B11).